The sequence spans 777 residues: Degenerin unc-8 (777 aa).

Over 1-128 (MSPLLTWNLI…VATSSFFGRY (128 aa)) the chain is Cytoplasmic. The chain crosses the membrane as a helical span at residues 129–149 (VWAALFMCMLMAFLLQTYWTM). The Extracellular segment spans residues 150-689 (SEYLQYRTII…KETAGYTLVN (540 aa)). N-linked (GlcNAc...) asparagine glycans are attached at residues N274, N319, N357, N411, N453, N533, and N597. The chain crosses the membrane as a helical span at residues 690 to 710 (LFSDFGGNIGLWIGFSVITFA). The Cytoplasmic portion of the chain corresponds to 711–777 (EFAELFCEIC…NESTKELMSK (67 aa)). A disordered region spans residues 752-777 (QRSPKKSQPGEDEVSTNESTKELMSK).

The protein belongs to the amiloride-sensitive sodium channel (TC 1.A.6) family.

The protein localises to the membrane. In terms of biological role, sodium permeable non-voltage-sensitive ion channel. Involved in the activity-dependent removal of selected presynaptic proteins, such as synaptobrevin snb-1, and Ras-related rab-3, in the remodeling of GABAergic motor neurons. This chain is Degenerin unc-8, found in Caenorhabditis elegans.